The following is a 90-amino-acid chain: Putative beta-neurotoxin RjAa2f (90 aa).

A signal peptide spans 1 to 18 (MKILIFIIASFMLIGVEC). In terms of domain architecture, LCN-type CS-alpha/beta spans 19 to 89 (KEGYPMGSDG…VWDSKTNKCG (71 aa)). 4 disulfide bridges follow: C29/C88, C33/C62, C40/C69, and C44/C71.

The protein belongs to the long (4 C-C) scorpion toxin superfamily. Sodium channel inhibitor family. Beta subfamily. As to expression, expressed by the venom gland.

The protein resides in the secreted. In terms of biological role, beta toxins bind voltage-independently at site-4 of sodium channels (Nav) and shift the voltage of activation toward more negative potentials thereby affecting sodium channel activation and promoting spontaneous and repetitive firing. This Rhopalurus junceus (Caribbean blue scorpion) protein is Putative beta-neurotoxin RjAa2f.